The following is a 221-amino-acid chain: GTP cyclohydrolase 1 (221 aa).

Zn(2+)-binding residues include Cys-111, His-114, and Cys-182.

It belongs to the GTP cyclohydrolase I family. Homomer.

It catalyses the reaction GTP + H2O = 7,8-dihydroneopterin 3'-triphosphate + formate + H(+). The protein operates within cofactor biosynthesis; 7,8-dihydroneopterin triphosphate biosynthesis; 7,8-dihydroneopterin triphosphate from GTP: step 1/1. The polypeptide is GTP cyclohydrolase 1 (Erwinia tasmaniensis (strain DSM 17950 / CFBP 7177 / CIP 109463 / NCPPB 4357 / Et1/99)).